The following is a 340-amino-acid chain: Lipopolysaccharide heptosyltransferase 3 (340 aa).

Belongs to the glycosyltransferase 9 family.

It catalyses the reaction an L-alpha-D-Hep-(1-&gt;3)-4-O-phospho-L-alpha-D-Hep-(1-&gt;5)-[alpha-Kdo-(2-&gt;4)]-alpha-Kdo-(2-&gt;6)-lipid A + ADP-L-glycero-beta-D-manno-heptose = an L-alpha-D-Hep-(1-&gt;7)-L-alpha-D-Hep-(1-&gt;3)-4-O-phospho-L-alpha-D-Hep-(1-&gt;5)-[alpha-Kdo-(2-&gt;4)]-alpha-Kdo-(2-&gt;6)-lipid A + ADP + H(+). The catalysed reaction is L-alpha-D-Hep-(1-&gt;3)-4-O-phospho-L-alpha-D-Hep-(1-&gt;5)-[alpha-Kdo-(2-&gt;4)]-alpha-Kdo-(2-&gt;6)-lipid A (E. coli) + ADP-L-glycero-beta-D-manno-heptose = L-alpha-D-Hep-(1-&gt;7)-L-alpha-D-Hep-(1-&gt;3)-4-O-phospho-L-alpha-D-Hep-(1-&gt;5)-[alpha-Kdo-(2-&gt;4)]-alpha-Kdo-(2-&gt;6)-lipid A (E. coli) + ADP + H(+). It functions in the pathway bacterial outer membrane biogenesis; LPS core biosynthesis. Glycosyltransferase involved in the biosynthesis of the core oligosaccharide region of lipopolysaccharide (LPS). Catalyzes the addition of the third heptose unit (HepIII) to the second heptose unit (HepII) of the phospho-Hep2-Kdo2-lipid A module. The transfer of HepIII seems to be a prerequisite to the phosphorylation of the second heptose unit. This is Lipopolysaccharide heptosyltransferase 3 from Escherichia coli.